A 113-amino-acid polypeptide reads, in one-letter code: Ig kappa chain V-II region 7S34.1 (113 aa).

A framework-1 region spans residues 1 to 23; it reads DIVMTQTAPSALVTPGESVSISC. A disulfide bridge connects residues cysteine 23 and cysteine 93. Residues 24-39 form a complementarity-determining-1 region; that stretch reads RSSKSLLHSNGNTYLY. The interval 40–54 is framework-2; it reads WFLQRPGQCPQLLIY. Residues 55–61 form a complementarity-determining-2 region; that stretch reads RMSNLAS. A framework-3 region spans residues 62–93; sequence GVPDRFSGSGSGTAFTLRISRVEAEDVGVYYC. The tract at residues 94-102 is complementarity-determining-3; that stretch reads MQQREYPYT. The tract at residues 103 to 112 is framework-4; sequence FGGGTKLEIK.

The sequence is that of Ig kappa chain V-II region 7S34.1 from Mus musculus (Mouse).